Here is a 37-residue protein sequence, read N- to C-terminus: Large ribosomal subunit protein bL36 (37 aa).

This sequence belongs to the bacterial ribosomal protein bL36 family.

This Leptothrix cholodnii (strain ATCC 51168 / LMG 8142 / SP-6) (Leptothrix discophora (strain SP-6)) protein is Large ribosomal subunit protein bL36.